The primary structure comprises 408 residues: Peptidase T (408 aa).

Residue His-78 participates in Zn(2+) binding. Asp-80 is a catalytic residue. Asp-141 lines the Zn(2+) pocket. The active-site Proton acceptor is the Glu-175. 3 residues coordinate Zn(2+): Glu-176, Asp-198, and His-380.

Belongs to the peptidase M20B family. It depends on Zn(2+) as a cofactor.

It is found in the cytoplasm. It catalyses the reaction Release of the N-terminal residue from a tripeptide.. Functionally, cleaves the N-terminal amino acid of tripeptides. The sequence is that of Peptidase T from Clostridium botulinum (strain Kyoto / Type A2).